A 581-amino-acid chain; its full sequence is 2-hydroxyacyl-CoA lyase 1 (581 aa).

Phosphoserine occurs at positions 4 and 6. E63 is a binding site for thiamine diphosphate. N6-succinyllysine occurs at positions 354, 361, and 368. The thiamine pyrophosphate binding stretch occupies residues 404–487 (TMDIGRTMLQ…IILLVVNNNG (84 aa)). Residues D458 and N485 each coordinate Mg(2+). The Microbody targeting signal motif lies at 579–581 (SNM).

This sequence belongs to the TPP enzyme family. In terms of assembly, homotetramer. Mg(2+) serves as cofactor. The cofactor is thiamine diphosphate. As to expression, predominanly expressed in liver.

Its subcellular location is the peroxisome. The catalysed reaction is a 2-hydroxy-3-methyl fatty acyl-CoA = a 2-methyl-branched fatty aldehyde + formyl-CoA. It carries out the reaction an (R)-2-hydroxy-long-chain-fatty acyl-CoA = a long-chain fatty aldehyde + formyl-CoA. The enzyme catalyses 2-hydroxy-3-methylhexadecanoyl-CoA = 2-methylpentadecanal + formyl-CoA. It catalyses the reaction 2-hydroxyoctadecanoyl-CoA = heptadecanal + formyl-CoA. The catalysed reaction is 2-hydroxyphytanoyl-CoA = 2,6,10,14-tetramethylpentadecanal + formyl-CoA. It functions in the pathway lipid metabolism; fatty acid metabolism. Functionally, peroxisomal 2-OH acyl-CoA lyase involved in the cleavage (C1 removal) reaction in the fatty acid alpha-oxydation in a thiamine pyrophosphate (TPP)-dependent manner. Involved in the degradation of 3-methyl-branched fatty acids like phytanic acid and the shortening of 2-hydroxy long-chain fatty acids. Plays a significant role in the biosynthesis of heptadecanal in the liver. The protein is 2-hydroxyacyl-CoA lyase 1 (Hacl1) of Mus musculus (Mouse).